Consider the following 276-residue polypeptide: Putative pyruvate, phosphate dikinase regulatory protein 1 (276 aa).

ADP is bound at residue Gly157–Thr164.

This sequence belongs to the pyruvate, phosphate/water dikinase regulatory protein family. PDRP subfamily.

It catalyses the reaction N(tele)-phospho-L-histidyl/L-threonyl-[pyruvate, phosphate dikinase] + ADP = N(tele)-phospho-L-histidyl/O-phospho-L-threonyl-[pyruvate, phosphate dikinase] + AMP + H(+). The enzyme catalyses N(tele)-phospho-L-histidyl/O-phospho-L-threonyl-[pyruvate, phosphate dikinase] + phosphate + H(+) = N(tele)-phospho-L-histidyl/L-threonyl-[pyruvate, phosphate dikinase] + diphosphate. Its function is as follows. Bifunctional serine/threonine kinase and phosphorylase involved in the regulation of the pyruvate, phosphate dikinase (PPDK) by catalyzing its phosphorylation/dephosphorylation. In Staphylococcus haemolyticus (strain JCSC1435), this protein is Putative pyruvate, phosphate dikinase regulatory protein 1.